The chain runs to 500 residues: Aspartyl/glutamyl-tRNA(Asn/Gln) amidotransferase subunit B (500 aa).

The protein belongs to the GatB/GatE family. GatB subfamily. Heterotrimer of A, B and C subunits.

It carries out the reaction L-glutamyl-tRNA(Gln) + L-glutamine + ATP + H2O = L-glutaminyl-tRNA(Gln) + L-glutamate + ADP + phosphate + H(+). The enzyme catalyses L-aspartyl-tRNA(Asn) + L-glutamine + ATP + H2O = L-asparaginyl-tRNA(Asn) + L-glutamate + ADP + phosphate + 2 H(+). In terms of biological role, allows the formation of correctly charged Asn-tRNA(Asn) or Gln-tRNA(Gln) through the transamidation of misacylated Asp-tRNA(Asn) or Glu-tRNA(Gln) in organisms which lack either or both of asparaginyl-tRNA or glutaminyl-tRNA synthetases. The reaction takes place in the presence of glutamine and ATP through an activated phospho-Asp-tRNA(Asn) or phospho-Glu-tRNA(Gln). This is Aspartyl/glutamyl-tRNA(Asn/Gln) amidotransferase subunit B from Rhizobium meliloti (strain 1021) (Ensifer meliloti).